We begin with the raw amino-acid sequence, 429 residues long: 3-phosphoshikimate 1-carboxyvinyltransferase (429 aa).

Lys-23, Ser-24, and Arg-28 together coordinate 3-phosphoshikimate. Residue Lys-23 participates in phosphoenolpyruvate binding. Phosphoenolpyruvate-binding residues include Gly-95 and Arg-123. 3-phosphoshikimate is bound by residues Ser-168, Gln-170, Asp-316, and Lys-343. Gln-170 provides a ligand contact to phosphoenolpyruvate. The Proton acceptor role is filled by Asp-316. Residues Arg-347 and Arg-389 each coordinate phosphoenolpyruvate.

This sequence belongs to the EPSP synthase family. Monomer.

It localises to the cytoplasm. It carries out the reaction 3-phosphoshikimate + phosphoenolpyruvate = 5-O-(1-carboxyvinyl)-3-phosphoshikimate + phosphate. It participates in metabolic intermediate biosynthesis; chorismate biosynthesis; chorismate from D-erythrose 4-phosphate and phosphoenolpyruvate: step 6/7. Functionally, catalyzes the transfer of the enolpyruvyl moiety of phosphoenolpyruvate (PEP) to the 5-hydroxyl of shikimate-3-phosphate (S3P) to produce enolpyruvyl shikimate-3-phosphate and inorganic phosphate. In Bacillus cereus (strain G9842), this protein is 3-phosphoshikimate 1-carboxyvinyltransferase.